Consider the following 118-residue polypeptide: Large ribosomal subunit protein bL19 (118 aa).

This sequence belongs to the bacterial ribosomal protein bL19 family.

This protein is located at the 30S-50S ribosomal subunit interface and may play a role in the structure and function of the aminoacyl-tRNA binding site. The protein is Large ribosomal subunit protein bL19 of Frankia alni (strain DSM 45986 / CECT 9034 / ACN14a).